Here is an 875-residue protein sequence, read N- to C-terminus: MTLARFVLALMLGALPEVVGFDSVLNDSLHHSHRHSPPAGPHYPYYLPTQQRPPRTRPPPPLPRFPRPPRALPAQRPHALQAGHTPRPHPWGCPAGEPWVSVTDFGAPCLRWAEVPPFLERSPPASWAQLRGQRHNFCRSPDGAGRPWCFYGDARGKVDWGYCDCRHGSVRLRGGKNEFEGTVEVYASGVWGTVCSSHWDDSDASVICHQLQLGGKGIAKQTPFSGLGLIPIYWSNVRCRGDEENILLCEKDIWQGGVCPQKMAAAVTCSFSHGPTFPIIRLAGGSSVHEGRVELYHAGQWGTVCDDQWDDADAEVICRQLGLSGIAKAWHQAYFGEGSGPVMLDEVRCTGNELSIEQCPKSSWGEHNCGHKEDAGVSCTPLTDGVIRLAGGKGSHEGRLEVYYRGQWGTVCDDGWTELNTYVVCRQLGFKYGKQASANHFEESTGPIWLDDVSCSGKETRFLQCSRRQWGRHDCSHREDVSIACYPGGEGHRLSLGFPVRLMDGENKKEGRVEVFINGQWGTICDDGWTDKDAAVICRQLGYKGPARARTMAYFGEGKGPIHVDNVKCTGNERSLADCIKQDIGRHNCRHSEDAGVICDYFGKKASGNSNKESLSSVCGLRLLHRRQKRIIGGKNSLRGGWPWQVSLRLKSSHGDGRLLCGATLLSSCWVLTAAHCFKRYGNSTRSYAVRVGDYHTLVPEEFEEEIGVQQIVIHREYRPDRSDYDIALVRLQGPEEQCARFSSHVLPACLPLWRERPQKTASNCYITGWGDTGRAYSRTLQQAAIPLLPKRFCEERYKGRFTGRMLCAGNLHEHKRVDSCQGDSGGPLMCERPGESWVVYGVTSWGYGCGVKDSPGVYTKVSAFVPWIKSVTKL.

The N-terminal stretch at M1–G20 is a signal peptide. N26 is a glycosylation site (N-linked (GlcNAc...) asparagine). Residues L29–P88 form a disordered region. The span at T56–A71 shows a compositional bias: pro residues. A Kringle domain is found at C93–C165. Cystine bridges form between C93–C165, C109–C149, C138–C163, C195–C259, C208–C269, C239–C249, C305–C369, C318–C379, C349–C359, C412–C475, C425–C485, C455–C465, C525–C589, C538–C599, C569–C579, C619–C750, C661–C677, C765–C831, C794–C808, and C821–C850. SRCR domains are found at residues V170–F271, I280–P381, I387–P487, and V500–Y601. Residues C619–R630 form a zymogen activation region region. The region spanning I631 to K874 is the Peptidase S1 domain. The active-site Charge relay system is H676. An N-linked (GlcNAc...) asparagine glycan is attached at N683. D726 (charge relay system) is an active-site residue. S825 (charge relay system) is an active-site residue.

It belongs to the peptidase S1 family. Brain and Leydig cells of the testis.

It is found in the secreted. In terms of biological role, plays a role in neuronal plasticity and the proteolytic action may subserve structural reorganizations associated with learning and memory operations. The chain is Neurotrypsin (PRSS12) from Homo sapiens (Human).